A 275-amino-acid chain; its full sequence is Notch homolog 2 N-terminal-like protein B (275 aa).

The signal sequence occupies residues Met1 to Ala25. 4 consecutive EGF-like domains span residues Leu26–Gln63, His64–Gln102, Thr105–Gln143, and Trp144–Glu180. Cystine bridges form between Cys28–Cys41, Cys35–Cys51, Cys53–Cys62, Cys68–Cys79, Cys73–Cys90, Cys92–Cys101, Cys109–Cys121, Cys115–Cys131, Cys133–Cys142, Cys148–Cys159, Cys153–Cys168, Cys170–Cys179, Cys186–Cys198, Cys192–Cys207, Cys209–Cys218, Cys225–Cys236, and Cys230–Cys246. N-linked (GlcNAc...) asparagine glycosylation is present at Asn46. Asn155 carries an N-linked (GlcNAc...) asparagine glycan. The EGF-like 5; calcium-binding domain occupies Asp182–Asp219. An EGF-like 6 domain is found at Leu221 to Glu258.

This sequence belongs to the NOTCH family. In terms of assembly, interacts with NOTCH2. Interacts with DLL1; the interaction is direct. Expressed in radial glia neural stem cells during cortical development.

The protein resides in the secreted. Human-specific protein that promotes neural progenitor proliferation and evolutionary expansion of the brain neocortex by regulating the Notch signaling pathway. Able to promote neural progenitor self-renewal, possibly by down-regulating neuronal differentiation genes, thereby delaying the differentiation of neuronal progenitors and leading to an overall final increase in neuronal production. Acts by enhancing the Notch signaling pathway via two different mechanisms that probably work in parallel to reach the same effect. Enhances Notch signaling pathway in a non-cell-autonomous manner via direct interaction with NOTCH2. Also promotes Notch signaling pathway in a cell-autonomous manner through inhibition of cis DLL1-NOTCH2 interactions, which promotes neuronal differentiation. This chain is Notch homolog 2 N-terminal-like protein B, found in Homo sapiens (Human).